Consider the following 712-residue polypeptide: Probable GTP diphosphokinase RSH3, chloroplastic (712 aa).

The transit peptide at methionine 1–serine 64 directs the protein to the chloroplast. The segment covering serine 65–serine 74 has biased composition (low complexity). Positions serine 65–histidine 84 are disordered. Residues tyrosine 237–methionine 338 enclose the HD domain.

The protein belongs to the RelA/SpoT family.

The protein localises to the plastid. The protein resides in the chloroplast. It catalyses the reaction GTP + ATP = guanosine 3'-diphosphate 5'-triphosphate + AMP. In terms of biological role, probable ppGpp (guanosine 3'-diphosphate 5'-diphosphate) synthetase that may be involved in a rapid plant ppGpp-mediated response to pathogens and other stresses. The protein is Probable GTP diphosphokinase RSH3, chloroplastic (RSH3) of Arabidopsis thaliana (Mouse-ear cress).